Here is a 257-residue protein sequence, read N- to C-terminus: Adenosylcobinamide-GDP ribazoletransferase (257 aa).

7 helical membrane passes run 30–50 (IVYFPLVGFVIGILSYLIGWI), 52–72 (MLLFEPFIASIIITLAGVLIT), 109–129 (SLLAIMFVLLLKVGFVYDIIS), 132–152 (SLWVIIFMPMIARLGVMLLTY), 175–195 (LITAIIYTLLIVALITKFIFL), 198–218 (NIVLIKVLGSIIVVFVFIILF), and 237–257 (GIELSELVYLIYIYLLIFMFF).

The protein belongs to the CobS family. Requires Mg(2+) as cofactor.

It localises to the cell membrane. The enzyme catalyses alpha-ribazole + adenosylcob(III)inamide-GDP = adenosylcob(III)alamin + GMP + H(+). It carries out the reaction alpha-ribazole 5'-phosphate + adenosylcob(III)inamide-GDP = adenosylcob(III)alamin 5'-phosphate + GMP + H(+). The protein operates within cofactor biosynthesis; adenosylcobalamin biosynthesis; adenosylcobalamin from cob(II)yrinate a,c-diamide: step 7/7. Joins adenosylcobinamide-GDP and alpha-ribazole to generate adenosylcobalamin (Ado-cobalamin). Also synthesizes adenosylcobalamin 5'-phosphate from adenosylcobinamide-GDP and alpha-ribazole 5'-phosphate. The chain is Adenosylcobinamide-GDP ribazoletransferase from Clostridioides difficile (strain 630) (Peptoclostridium difficile).